We begin with the raw amino-acid sequence, 599 residues long: Elongation factor 4 (599 aa).

Residues Lys-4–Leu-186 enclose the tr-type G domain. GTP contacts are provided by residues Asp-16–Thr-21 and Asn-133–Asp-136.

The protein belongs to the TRAFAC class translation factor GTPase superfamily. Classic translation factor GTPase family. LepA subfamily.

Its subcellular location is the cell membrane. The catalysed reaction is GTP + H2O = GDP + phosphate + H(+). Functionally, required for accurate and efficient protein synthesis under certain stress conditions. May act as a fidelity factor of the translation reaction, by catalyzing a one-codon backward translocation of tRNAs on improperly translocated ribosomes. Back-translocation proceeds from a post-translocation (POST) complex to a pre-translocation (PRE) complex, thus giving elongation factor G a second chance to translocate the tRNAs correctly. Binds to ribosomes in a GTP-dependent manner. This is Elongation factor 4 from Ureaplasma parvum serovar 3 (strain ATCC 27815 / 27 / NCTC 11736).